We begin with the raw amino-acid sequence, 791 residues long: Valine--tRNA ligase (791 aa).

The short motif at 40–50 is the 'HIGH' region element; sequence PTVSGKMHMGH. The short motif at 521 to 525 is the 'KMSKS' region element; it reads KMSKS. Residue K524 participates in ATP binding.

It belongs to the class-I aminoacyl-tRNA synthetase family. ValS type 2 subfamily.

It localises to the cytoplasm. It carries out the reaction tRNA(Val) + L-valine + ATP = L-valyl-tRNA(Val) + AMP + diphosphate. Functionally, catalyzes the attachment of valine to tRNA(Val). As ValRS can inadvertently accommodate and process structurally similar amino acids such as threonine, to avoid such errors, it has a 'posttransfer' editing activity that hydrolyzes mischarged Thr-tRNA(Val) in a tRNA-dependent manner. This is Valine--tRNA ligase from Thermoplasma acidophilum (strain ATCC 25905 / DSM 1728 / JCM 9062 / NBRC 15155 / AMRC-C165).